The sequence spans 425 residues: WD repeat-containing protein JIP5 (425 aa).

WD repeat units lie at residues 9 to 48 (QLDS…SDDS), 71 to 110 (RHKG…VTAK), 117 to 158 (LANG…AKSA), 219 to 262 (ELLS…DQDE), and 321 to 358 (LRQE…DVPE). A disordered region spans residues 354–425 (QDVPEDDEDE…HGILHFSGLA (72 aa)). 2 stretches are compositionally biased toward acidic residues: residues 356-368 (VPED…EEEA) and 378-396 (SDED…EDDE). Over residues 399 to 414 (QKRKKRRKGKGGKQAK) the composition is skewed to basic residues.

This sequence belongs to the WD repeat WDR55 family.

It localises to the nucleus. The protein localises to the nucleolus. This is WD repeat-containing protein JIP5 (JIP5) from Phaeosphaeria nodorum (strain SN15 / ATCC MYA-4574 / FGSC 10173) (Glume blotch fungus).